The primary structure comprises 208 residues: Protein-L-isoaspartate O-methyltransferase (208 aa).

The active site involves Ser-59.

This sequence belongs to the methyltransferase superfamily. L-isoaspartyl/D-aspartyl protein methyltransferase family.

The protein localises to the cytoplasm. The enzyme catalyses [protein]-L-isoaspartate + S-adenosyl-L-methionine = [protein]-L-isoaspartate alpha-methyl ester + S-adenosyl-L-homocysteine. Functionally, catalyzes the methyl esterification of L-isoaspartyl residues in peptides and proteins that result from spontaneous decomposition of normal L-aspartyl and L-asparaginyl residues. It plays a role in the repair and/or degradation of damaged proteins. The polypeptide is Protein-L-isoaspartate O-methyltransferase (Klebsiella pneumoniae (strain 342)).